Consider the following 742-residue polypeptide: MSENNFDIQSPPCVLCGWTDNCPEKYGEKRTYVEYNLTLHNYCLLMSSGIWQRGEENEGVDGFLIEDIRKEVNRAARLMCNICRKKGASIGCVAPKCKRSYHFPCGLQKECVFQFMEDFRSYCWEHKPVQIFSDKESREPSQCTICLDLVEHLPLYSVLRSPCCKNTWFHRECLQYQALSAGIFFFRCAVCNNKDKFQKEMLRMGIHIPEKDASWELEDNAYQDLLQCYQHCDIRRCLCKNGRDYNKPDSKWEIKRCQSCGSRGTHLACSSIKSWEQNWECVECRSIFAKGKYSKRKKHSLAPSEKMDGTTCLLEEPSPKLPRQSPGSQRNCLLQSPKIICQNNLSPCSLLELPTSNRVAMSLSPLMSNRNCSLRKKHLRMQRKEASNILKELKQQINTKTTRLNINTENIWNSALKGFRQRNFRPTNTIEVKFTNCKNRVKTDSFTGSKHLFFHLLMLHIQNSSLFEGSSAKNLSVDPQALKENLYFEAGKMIAVSLVHGGPSPGFFSKILFDCLVYGPENVKPNLDDVADAGVAQTIKKIKYSESLSSLQSTVRDCYDFLAAAGCLRPITSLRDKDMLVNDLLIHHVIKRIISPLESFRQGLKTLGLLEKMEMHQDAFSSLFCHKPENLSAEALCDLFTIHSSPDVNKVGAADFWMGYLQDVESGESVVTLQDILFFVTGCSSIPPIGFDPEPTIKFLPVHYPIGNRLLNCLELPITRTYENFKNKMEFTIRSTLRGERE.

The C2HC pre-PHD-type zinc finger occupies 10–50 (SPPCVLCGWTDNCPEKYGEKRTYVEYNLTLHNYCLLMSSGI). The segment at 78-127 (LMCNICRKKGASIGCVAPKCKRSYHFPCGLQKECVFQFMEDFRSYCWEHK) adopts a PHD-type 1 zinc-finger fold. The segment at 142–192 (QCTICLDLVEHLPLYSVLRSPCCKNTWFHRECLQYQALSAGIFFFRCAVCN) adopts a PHD-type 2; degenerate zinc-finger fold. A PHD-type 3 zinc finger spans residues 236-285 (RCLCKNGRDYNKPDSKWEIKRCQSCGSRGTHLACSSIKSWEQNWECVECR). The region spanning 417-742 (KGFRQRNFRP…IRSTLRGERE (326 aa)) is the HECT domain.

The protein localises to the nucleus. The protein resides in the nucleolus. It localises to the cytoplasm. It carries out the reaction S-ubiquitinyl-[E2 ubiquitin-conjugating enzyme]-L-cysteine + [acceptor protein]-L-lysine = [E2 ubiquitin-conjugating enzyme]-L-cysteine + N(6)-ubiquitinyl-[acceptor protein]-L-lysine.. Its pathway is protein modification; protein ubiquitination. Its function is as follows. E3 ubiquitin-protein ligase which accepts ubiquitin from an E2 ubiquitin-conjugating enzyme in the form of a thioester and then directly transfers the ubiquitin to targeted substrates. Essential in early embryonic development to prevent apoptotic death. This Gallus gallus (Chicken) protein is G2/M phase-specific E3 ubiquitin-protein ligase (G2E3).